The following is a 443-amino-acid chain: tRNA modification GTPase MnmE (443 aa).

Arg23, Glu82, and Lys121 together coordinate (6S)-5-formyl-5,6,7,8-tetrahydrofolate. A TrmE-type G domain is found at 215 to 364; sequence GTSIVLAGHP…LKQFIQQWMQ (150 aa). Residue Asn225 coordinates K(+). GTP contacts are provided by residues 225 to 230, 244 to 250, and 269 to 272; these read NAGKSS, TDIPGTT, and DSAG. Ser229 provides a ligand contact to Mg(2+). K(+) is bound by residues Thr244, Ile246, and Thr249. Residue Thr250 coordinates Mg(2+). Lys443 lines the (6S)-5-formyl-5,6,7,8-tetrahydrofolate pocket.

It belongs to the TRAFAC class TrmE-Era-EngA-EngB-Septin-like GTPase superfamily. TrmE GTPase family. In terms of assembly, homodimer. Heterotetramer of two MnmE and two MnmG subunits. K(+) serves as cofactor.

It is found in the cytoplasm. Exhibits a very high intrinsic GTPase hydrolysis rate. Involved in the addition of a carboxymethylaminomethyl (cmnm) group at the wobble position (U34) of certain tRNAs, forming tRNA-cmnm(5)s(2)U34. This chain is tRNA modification GTPase MnmE, found in Chlamydia abortus (strain DSM 27085 / S26/3) (Chlamydophila abortus).